The primary structure comprises 313 residues: MEAGPWRVSAPPSGPPQFPAVVPGPSLEVARAHMLALGPQQLLAQDEEGDTLLHLFAARGLRWAAYAAAEVLQVYRRLDIREHKGKTPLLVAAAANQPLIVEDLLNLGAEPNAADHQGRSVLHVAATYGLPGVLLAVLNSGVQVDLEARDFEGLTPLHTAILALNVAMRPSDLCPRVLSTQARDRLDCVHMLLQMGANHTSQEIKSNKTVLHLAVQAANPTLVQLLLELPRGDLRTFVNMKAHGNTALHMAAALPPGPAQEAIVRHLLAAGADPTLRNLENEQPVHLLRPGPGPEGLRQLLKRSRVAPPGLSS.

ANK repeat units lie at residues Glu-48 to His-83, Lys-84 to Ala-113, Gln-117 to Leu-146, Glu-152 to Ser-201, Ser-206 to Thr-236, and His-243 to Leu-276.

The protein belongs to the NF-kappa-B inhibitor family. Interacts with NFKB1, RELA and RELB; in the nucleus.

The protein localises to the nucleus. In terms of biological role, regulates the expression of IL-2, IL-6, and other cytokines through regulation on NF-kappa-B activity. Functions in the regulation of inflammatory responses. Involved in the induction of T helper 17 cells (Th17) differentiation upon recognition of antigen by T cell antigen receptor (TCR). May also regulate TCR-induced negative selection of thymocytes. The polypeptide is NF-kappa-B inhibitor delta (NFKBID) (Homo sapiens (Human)).